A 110-amino-acid chain; its full sequence is Hydrogenase maturation factor HypA (110 aa).

Histidine 2 contributes to the Ni(2+) binding site. Residues cysteine 70, cysteine 73, cysteine 86, and cysteine 89 each coordinate Zn(2+).

It belongs to the HypA/HybF family.

In terms of biological role, involved in the maturation of [NiFe] hydrogenases. Required for nickel insertion into the metal center of the hydrogenase. This chain is Hydrogenase maturation factor HypA, found in Geotalea uraniireducens (strain Rf4) (Geobacter uraniireducens).